The following is a 144-amino-acid chain: MWLAILLALCCLTSDTHGARPPDFCSKDLISSVKPGFPKTIETNNPGVLKAARHSVEKFNNCTNDIFLFKESHVSKALVQVVKGLKYMLEVKIGRTTCRKTMHHQLDNCDFQTNPALKRTLYCYSEVWVIPWLHSFEVPVLLCQ.

Residues 1–18 form the signal peptide; that stretch reads MWLAILLALCCLTSDTHG. N-linked (GlcNAc...) asparagine glycosylation occurs at asparagine 61. The Secondary area of contact motif lies at 80–84; it reads QVVKG. Cystine bridges form between cysteine 98/cysteine 109 and cysteine 123/cysteine 143.

This sequence belongs to the cystatin family.

It is found in the secreted. Its function is as follows. Inhibits papain and cathepsin L but with affinities lower than other cystatins. May play a role in immune regulation through inhibition of a unique target in the hematopoietic system. The chain is Cystatin-F (Cst7) from Mus musculus (Mouse).